Consider the following 165-residue polypeptide: Neurotrophin-3 (165 aa).

The N-terminal stretch at 1-3 (IQS) is a signal peptide. Residues 4 to 119 (TSMDQGSLSE…VLNRTSRRKR (116 aa)) constitute a propeptide that is removed on maturation. The segment at 32–61 (KVPKQAARTKDGTQTTAKKTEAEPEATANK) is disordered. Asparagine 112 carries an N-linked (GlcNAc...) asparagine glycan.

It belongs to the NGF-beta family.

Its subcellular location is the secreted. Seems to promote the survival of visceral and proprioceptive sensory neurons. This chain is Neurotrophin-3 (NTF3), found in Xenopeltis unicolor (Sunbeam snake).